Consider the following 287-residue polypeptide: Bifunctional protein FolD (287 aa).

Residues 160–162 (GRS), Ser189, and Thr230 contribute to the NADP(+) site.

The protein belongs to the tetrahydrofolate dehydrogenase/cyclohydrolase family. As to quaternary structure, homodimer.

The catalysed reaction is (6R)-5,10-methylene-5,6,7,8-tetrahydrofolate + NADP(+) = (6R)-5,10-methenyltetrahydrofolate + NADPH. The enzyme catalyses (6R)-5,10-methenyltetrahydrofolate + H2O = (6R)-10-formyltetrahydrofolate + H(+). Its pathway is one-carbon metabolism; tetrahydrofolate interconversion. Catalyzes the oxidation of 5,10-methylenetetrahydrofolate to 5,10-methenyltetrahydrofolate and then the hydrolysis of 5,10-methenyltetrahydrofolate to 10-formyltetrahydrofolate. The polypeptide is Bifunctional protein FolD (Chlamydia muridarum (strain MoPn / Nigg)).